Here is a 432-residue protein sequence, read N- to C-terminus: MRVLVLGSGVIGTASAYYLARAGFEVVVVDRQDGPALETSFANAGQVSPGYASPWAAPGIPLKAMKWLLEKHAPLAIKLTSDPSQYAWMLQMLRNCTAERYAVNKERMVRLSEYSRDCLDELRAETGIAYEGRTLGTTQLFRTQAQLDAAGKDIAVLERSGVPYEVLDRDGIARVEPALAKVADKLVGALRLPNDQTGDCQLFTTRLAEMAKGLGVEFRFGQNIERLDFAGDRINGVLVNGELLTADHYVLALGSYSPQLLKPLGIKAPVYPLKGYSLTVPITNPEMAPTSTILDETYKVAITRFDQRIRVGGMAEIAGFDLSLNPRRRETLEMITTDLYPEGGDISQATFWTGLRPATPDGTPIVGATRYRNLFLNTGHGTLGWTMACGSGRYLADLMAKKRPQISTEGLDISRYSNSPENAKNAHPAPAH.

3–17 (VLVLGSGVIGTASAY) serves as a coordination point for FAD. The segment at 410–432 (GLDISRYSNSPENAKNAHPAPAH) is disordered.

This sequence belongs to the DadA oxidoreductase family. Requires FAD as cofactor.

It carries out the reaction a D-alpha-amino acid + A + H2O = a 2-oxocarboxylate + AH2 + NH4(+). Its pathway is amino-acid degradation; D-alanine degradation; NH(3) and pyruvate from D-alanine: step 1/1. Functionally, catalyzes the oxidative deamination of D-amino acids. Has very broad substrate specificity; all the D-amino acids tested can be used as the substrate except D-Glu and D-Gln. Participates in the utilization of several D-amino acids as the sole source of nitrogen, i.e. D-alanine, D-histidine, D-phenylalanine, D-serine, D-threonine, and D-valine. This chain is D-amino acid dehydrogenase 1 (dadA1), found in Pseudomonas aeruginosa (strain ATCC 15692 / DSM 22644 / CIP 104116 / JCM 14847 / LMG 12228 / 1C / PRS 101 / PAO1).